The following is a 447-amino-acid chain: Tubulin beta chain (447 aa).

Q11, E69, S138, G142, T143, G144, N204, and N226 together coordinate GTP. Residue E69 coordinates Mg(2+). The tract at residues 424–447 (QYQDAGVDEEEEEYEEEAPLEGEE) is disordered. Over residues 429–447 (GVDEEEEEYEEEAPLEGEE) the composition is skewed to acidic residues.

This sequence belongs to the tubulin family. In terms of assembly, dimer of alpha and beta chains. A typical microtubule is a hollow water-filled tube with an outer diameter of 25 nm and an inner diameter of 15 nM. Alpha-beta heterodimers associate head-to-tail to form protofilaments running lengthwise along the microtubule wall with the beta-tubulin subunit facing the microtubule plus end conferring a structural polarity. Microtubules usually have 13 protofilaments but different protofilament numbers can be found in some organisms and specialized cells. Requires Mg(2+) as cofactor.

Its subcellular location is the cytoplasm. It localises to the cytoskeleton. Functionally, tubulin is the major constituent of microtubules, a cylinder consisting of laterally associated linear protofilaments composed of alpha- and beta-tubulin heterodimers. Microtubules grow by the addition of GTP-tubulin dimers to the microtubule end, where a stabilizing cap forms. Below the cap, tubulin dimers are in GDP-bound state, owing to GTPase activity of alpha-tubulin. This chain is Tubulin beta chain (tub-2), found in Neurospora crassa (strain ATCC 24698 / 74-OR23-1A / CBS 708.71 / DSM 1257 / FGSC 987).